The chain runs to 119 residues: Ribosome-binding factor A (119 aa).

This sequence belongs to the RbfA family. Monomer. Binds 30S ribosomal subunits, but not 50S ribosomal subunits or 70S ribosomes.

It localises to the cytoplasm. Functionally, one of several proteins that assist in the late maturation steps of the functional core of the 30S ribosomal subunit. Associates with free 30S ribosomal subunits (but not with 30S subunits that are part of 70S ribosomes or polysomes). Required for efficient processing of 16S rRNA. May interact with the 5'-terminal helix region of 16S rRNA. This chain is Ribosome-binding factor A, found in Wolinella succinogenes (strain ATCC 29543 / DSM 1740 / CCUG 13145 / JCM 31913 / LMG 7466 / NCTC 11488 / FDC 602W) (Vibrio succinogenes).